A 201-amino-acid chain; its full sequence is dCTP deaminase, dUMP-forming (201 aa).

DCTP contacts are provided by residues 101 to 106 (KSSLGR), aspartate 119, 127 to 129 (TLE), glutamine 148, tyrosine 162, and glutamine 174. Glutamate 129 functions as the Proton donor/acceptor in the catalytic mechanism.

This sequence belongs to the dCTP deaminase family. As to quaternary structure, homotrimer.

The enzyme catalyses dCTP + 2 H2O = dUMP + NH4(+) + diphosphate. It participates in pyrimidine metabolism; dUMP biosynthesis; dUMP from dCTP: step 1/1. Its function is as follows. Bifunctional enzyme that catalyzes both the deamination of dCTP to dUTP and the hydrolysis of dUTP to dUMP without releasing the toxic dUTP intermediate. This Parafrankia sp. (strain EAN1pec) protein is dCTP deaminase, dUMP-forming.